The chain runs to 454 residues: Probable diacyglycerol O-acyltransferase tgs2 (454 aa).

The active-site Proton acceptor is the H139.

The protein belongs to the long-chain O-acyltransferase family.

The catalysed reaction is an acyl-CoA + a 1,2-diacyl-sn-glycerol = a triacyl-sn-glycerol + CoA. It catalyses the reaction a long chain fatty alcohol + a fatty acyl-CoA = a wax ester + CoA. Its pathway is glycerolipid metabolism; triacylglycerol biosynthesis. In terms of biological role, catalyzes the terminal and only committed step in triacylglycerol synthesis by using diacylglycerol and fatty acyl CoA as substrates. Required for storage lipid synthesis. This chain is Probable diacyglycerol O-acyltransferase tgs2 (tgs2), found in Mycobacterium tuberculosis (strain CDC 1551 / Oshkosh).